The following is a 511-amino-acid chain: cAMP-regulated M3L protein (511 aa).

The protein to D.discoideum protein M3R.

The protein is cAMP-regulated M3L protein (prtA) of Dictyostelium discoideum (Social amoeba).